Here is a 606-residue protein sequence, read N- to C-terminus: Adenine deaminase (606 aa).

The protein belongs to the metallo-dependent hydrolases superfamily. Adenine deaminase family. Mn(2+) serves as cofactor.

It catalyses the reaction adenine + H2O + H(+) = hypoxanthine + NH4(+). This Rubrobacter xylanophilus (strain DSM 9941 / JCM 11954 / NBRC 16129 / PRD-1) protein is Adenine deaminase.